The primary structure comprises 41 residues: Disintegrin obtustatin (41 aa).

4 disulfide bridges follow: cysteine 1/cysteine 10, cysteine 6/cysteine 29, cysteine 7/cysteine 34, and cysteine 19/cysteine 36. The Disintegrin domain occupies 1-41; that stretch reads CTTGPCCRQCKLKPAGTTCWKTSLTSHYCTGKSCDCPLYPG. The Cell attachment site; atypical (KTS) signature appears at 21 to 23; it reads KTS.

The protein belongs to the disintegrin family. Short disintegrin subfamily. Monomer. In terms of tissue distribution, expressed by the venom gland.

Its subcellular location is the secreted. In terms of biological role, is a potent and selective inhibitor of alpha-1/beta-1 (ITGA1/ITGB1) integrin. It blocks the adhesion of alpha-1/beta-1-expressing K562 cells to immobilized collagens IV and I with IC(50) of 2 and 0.5 nM, respectively. Potently inhibits angiogenesis in chicken and in mouse model and reduces tumor development by half. Is 25-fold less potent than viperistatin. In Macrovipera lebetina obtusa (Levant blunt-nosed viper), this protein is Disintegrin obtustatin.